A 66-amino-acid polypeptide reads, in one-letter code: Large ribosomal subunit protein bL33B (66 aa).

The protein belongs to the bacterial ribosomal protein bL33 family.

This is Large ribosomal subunit protein bL33B from Synechococcus sp. (strain CC9605).